The sequence spans 85 residues: U4-theraphotoxin-Hhn1a (85 aa).

An N-terminal signal peptide occupies residues 1–22; it reads MKVTLIAILTCAAVLVLHTTAA. Residues 23–48 constitute a propeptide that is removed on maturation; it reads EELEAESQLMEVGMPDTELEAVDEER. Intrachain disulfides connect Cys-52-Cys-66, Cys-56-Cys-77, and Cys-71-Cys-82.

It belongs to the neurotoxin 12 (Hwtx-2) family. 02 (Hwtx-2) subfamily. In terms of assembly, monomer. As to expression, expressed by the venom gland.

Its subcellular location is the secreted. In terms of biological role, neurotoxin active on both insects and mammals. The sequence is that of U4-theraphotoxin-Hhn1a from Cyriopagopus hainanus (Chinese bird spider).